The sequence spans 207 residues: Imidazole glycerol phosphate synthase subunit HisH (207 aa).

One can recognise a Glutamine amidotransferase type-1 domain in the interval 1 to 207; it reads MIAIVDYNMG…ENFTKYRNLK (207 aa). Cys-79 (nucleophile) is an active-site residue. Residues His-185 and Glu-187 contribute to the active site.

Heterodimer of HisH and HisF.

The protein resides in the cytoplasm. The catalysed reaction is 5-[(5-phospho-1-deoxy-D-ribulos-1-ylimino)methylamino]-1-(5-phospho-beta-D-ribosyl)imidazole-4-carboxamide + L-glutamine = D-erythro-1-(imidazol-4-yl)glycerol 3-phosphate + 5-amino-1-(5-phospho-beta-D-ribosyl)imidazole-4-carboxamide + L-glutamate + H(+). It carries out the reaction L-glutamine + H2O = L-glutamate + NH4(+). It participates in amino-acid biosynthesis; L-histidine biosynthesis; L-histidine from 5-phospho-alpha-D-ribose 1-diphosphate: step 5/9. Its function is as follows. IGPS catalyzes the conversion of PRFAR and glutamine to IGP, AICAR and glutamate. The HisH subunit catalyzes the hydrolysis of glutamine to glutamate and ammonia as part of the synthesis of IGP and AICAR. The resulting ammonia molecule is channeled to the active site of HisF. The sequence is that of Imidazole glycerol phosphate synthase subunit HisH from Sulfurimonas denitrificans (strain ATCC 33889 / DSM 1251) (Thiomicrospira denitrificans (strain ATCC 33889 / DSM 1251)).